The primary structure comprises 311 residues: tRNA N6-adenosine threonylcarbamoyltransferase (311 aa).

Positions 108 and 112 each coordinate Fe cation. Substrate is bound by residues 130–134 (LVSGG), D163, G176, D180, and N270. D294 contacts Fe cation.

Belongs to the KAE1 / TsaD family. Fe(2+) serves as cofactor.

It localises to the cytoplasm. The enzyme catalyses L-threonylcarbamoyladenylate + adenosine(37) in tRNA = N(6)-L-threonylcarbamoyladenosine(37) in tRNA + AMP + H(+). In terms of biological role, required for the formation of a threonylcarbamoyl group on adenosine at position 37 (t(6)A37) in tRNAs that read codons beginning with adenine. Is involved in the transfer of the threonylcarbamoyl moiety of threonylcarbamoyl-AMP (TC-AMP) to the N6 group of A37, together with TsaE and TsaB. TsaD likely plays a direct catalytic role in this reaction. The sequence is that of tRNA N6-adenosine threonylcarbamoyltransferase from Metamycoplasma arthritidis (strain 158L3-1) (Mycoplasma arthritidis).